Reading from the N-terminus, the 566-residue chain is MKISKEKYASMYGPTTGDRFRLADTTLIAKIEKDYTIYGEESKFGGGKTVRDGMAQSPTAVDVADLIITNAIIIDYTGIYKADIGIKDGKILAIGKSGNPNLCDGITEGLEIGANTEILSAEGKIITAGGIDTHIHFISPGQINEALSSGVTTMIGGGTGPNTGTNATTCTPGEWNISKMIQSVDDLPLNFGFMGKGNSSSYEALKVQIEAGAMGLKLHEDWGSTPNAIDTCLSVADDFDVQVAIHTDTLNESGFVEATVGAFKNRTIHTFHSEGAGGGHAPDIMKVAGLSNVLPSSTNPTLPYTKNTIEEHLDMLMVCHHLSPKIPEDVSFAESRIRGKTIAAEDVLHDLGAISITSSDSQAMGRVGEVIIRTWQVAHSMKQQRGTLEGDDEKSDNNRIKRYIAKYTINPAIACGIDEYVGSVEVGKMADLVLWNRAFFGVKPEIIIKGGFIALAMMGDSNASIPTPEPNMYRLMFGSLGRASGATSVIFTSKVASSNLKDKLGISKNVLPVKNTRNIGKANMKLNDFIGDIEIDSETYDVKINGEPIESNYVEKVPMARRYFMF.

The 438-residue stretch at 129-566 (GGIDTHIHFI…VPMARRYFMF (438 aa)) folds into the Urease domain. Residues histidine 134, histidine 136, and lysine 217 each contribute to the Ni(2+) site. Lysine 217 carries the post-translational modification N6-carboxylysine. A substrate-binding site is contributed by histidine 219. Positions 246 and 272 each coordinate Ni(2+). Residue histidine 320 is the Proton donor of the active site. Aspartate 360 provides a ligand contact to Ni(2+).

It belongs to the metallo-dependent hydrolases superfamily. Urease alpha subunit family. Heterohexamer of 3 UreA (alpha) and 3 UreB (beta) subunits. Requires Ni cation as cofactor. Post-translationally, carboxylation allows a single lysine to coordinate two nickel ions.

The protein resides in the cytoplasm. The enzyme catalyses urea + 2 H2O + H(+) = hydrogencarbonate + 2 NH4(+). It functions in the pathway nitrogen metabolism; urea degradation; CO(2) and NH(3) from urea (urease route): step 1/1. The protein is Urease subunit beta of Aliarcobacter butzleri (strain RM4018) (Arcobacter butzleri).